A 481-amino-acid chain; its full sequence is Regulator of G-protein signaling 1 (481 aa).

The tract at residues 1-31 (MPALHNPSSPPPSYEAVTSYRNGNSIDSGDK) is disordered. The interval 33–227 (QQCSRLMKIT…SVHEIGKSKN (195 aa)) is fungal-DR. In terms of domain architecture, DEP spans 232 to 312 (PVYSVSSPSP…KGVSYFLTGK (81 aa)). The RGS domain occupies 344–474 (ILETILRKPN…AGDSLLKFLE (131 aa)).

The protein localises to the nucleus. It localises to the cytoplasm. Functionally, negatively regulates pheromone signaling during mating. Acts in a negative feedback loop that is essential for the mating process. This loop acts to down-regulate cellular sensitivity to pheromone. Activated by ste11. This chain is Regulator of G-protein signaling 1 (rgs1), found in Schizosaccharomyces pombe (strain 972 / ATCC 24843) (Fission yeast).